The following is a 291-amino-acid chain: Putative heme-binding peroxidase (291 aa).

Catalysis depends on His-61, which acts as the Proton acceptor. His-185 lines the heme b pocket. Trp-201 functions as the Tryptophan radical intermediate in the catalytic mechanism.

It belongs to the peroxidase family. Cytochrome c peroxidase subfamily. The cofactor is heme b.

Its function is as follows. Destroys radicals which are normally produced within the cells and which are toxic to biological systems. This chain is Putative heme-binding peroxidase (CCP2), found in Candida albicans (strain SC5314 / ATCC MYA-2876) (Yeast).